A 108-amino-acid polypeptide reads, in one-letter code: Transcription factor AmrZ (108 aa).

Functionally, functions both as a transcriptional activator and a repressor of multiple genes encoding virulence factors as well as genes involved in environmental adaptation. Represses genes involved in iron homeostasis. Modulates intracellular levels of c-di-GMP which in turn regulates swimming motility and biofilm formation. In Pseudomonas ogarae (strain DSM 112162 / CECT 30235 / F113), this protein is Transcription factor AmrZ.